We begin with the raw amino-acid sequence, 143 residues long: 3-dehydroquinate dehydratase (143 aa).

Catalysis depends on Tyr-22, which acts as the Proton acceptor. Residues Asn-73, His-79, and Asp-86 each contribute to the substrate site. His-99 serves as the catalytic Proton donor. Substrate contacts are provided by residues 100 to 101 (IS) and Arg-110.

It belongs to the type-II 3-dehydroquinase family. Homododecamer.

The catalysed reaction is 3-dehydroquinate = 3-dehydroshikimate + H2O. It participates in metabolic intermediate biosynthesis; chorismate biosynthesis; chorismate from D-erythrose 4-phosphate and phosphoenolpyruvate: step 3/7. In terms of biological role, catalyzes a trans-dehydration via an enolate intermediate. The polypeptide is 3-dehydroquinate dehydratase (Mycolicibacterium paratuberculosis (strain ATCC BAA-968 / K-10) (Mycobacterium paratuberculosis)).